We begin with the raw amino-acid sequence, 132 residues long: Large ribosomal subunit protein bL19 (132 aa).

The protein belongs to the bacterial ribosomal protein bL19 family.

In terms of biological role, this protein is located at the 30S-50S ribosomal subunit interface and may play a role in the structure and function of the aminoacyl-tRNA binding site. In Nitrosomonas europaea (strain ATCC 19718 / CIP 103999 / KCTC 2705 / NBRC 14298), this protein is Large ribosomal subunit protein bL19.